The following is a 451-amino-acid chain: Probable multidrug resistance protein NorM (451 aa).

Helical transmembrane passes span 23-43 (GPVVVSQFAANALALIATAVI), 53-73 (AAAYANAAYYLVFIMVVGVML), 101-121 (LALLLSAVMLPLMWALSFVLP), 132-152 (LVAAYLRVYSLGMLPNLAFIA), 169-189 (VALTGVVWALLVAPALAFGWG), 194-214 (LGLAGAAGASASAAWIMAALL), 243-263 (WPIGLTLGAEGGMFSVTTLLM), 277-297 (TMQTITAFFMVPLGIASATGV), 316-336 (LVGLGLSSAVMLTFAVIELAA), 355-375 (LIAAATGFLSIAALFQLMDGL), 391-411 (VPLLVSLVAYWVVGLGLGSVL), and 422-442 (LWFGLTAGLTLAGLSLVGRFL).

This sequence belongs to the multi antimicrobial extrusion (MATE) (TC 2.A.66.1) family.

It localises to the cell membrane. Functionally, multidrug efflux pump. The sequence is that of Probable multidrug resistance protein NorM (norM) from Deinococcus radiodurans (strain ATCC 13939 / DSM 20539 / JCM 16871 / CCUG 27074 / LMG 4051 / NBRC 15346 / NCIMB 9279 / VKM B-1422 / R1).